Reading from the N-terminus, the 777-residue chain is Homoaconitase, mitochondrial (777 aa).

A mitochondrion-targeting transit peptide spans 1–35 (MFKRTGSLLLRCRASRVPVIGRPLISLSTSSTSLS). The disordered stretch occupies residues 47-74 (LRRYTEASSSTTQTSPSSSSWPAPDAAP). The span at 52-74 (EASSSTTQTSPSSSSWPAPDAAP) shows a compositional bias: low complexity. Positions 398, 466, and 469 each coordinate [4Fe-4S] cluster.

This sequence belongs to the aconitase/IPM isomerase family. [4Fe-4S] cluster serves as cofactor.

It is found in the mitochondrion. It catalyses the reaction (2R,3S)-homoisocitrate = cis-homoaconitate + H2O. Its pathway is amino-acid biosynthesis; L-lysine biosynthesis via AAA pathway; L-alpha-aminoadipate from 2-oxoglutarate: step 3/5. Its function is as follows. Catalyzes the reversible hydration of cis-homoaconitate to (2R,3S)-homoisocitrate, a step in the alpha-aminoadipate pathway for lysine biosynthesis. This Aspergillus fumigatus (strain ATCC MYA-4609 / CBS 101355 / FGSC A1100 / Af293) (Neosartorya fumigata) protein is Homoaconitase, mitochondrial (lys4).